A 401-amino-acid chain; its full sequence is 8-amino-7-oxononanoate synthase (401 aa).

R24 is a substrate binding site. 111-112 (GF) is a pyridoxal 5'-phosphate binding site. H137 is a binding site for substrate. Positions 183, 211, and 240 each coordinate pyridoxal 5'-phosphate. Residue K243 is modified to N6-(pyridoxal phosphate)lysine. Residue T357 coordinates substrate.

This sequence belongs to the class-II pyridoxal-phosphate-dependent aminotransferase family. BioF subfamily. In terms of assembly, homodimer. Requires pyridoxal 5'-phosphate as cofactor.

It catalyses the reaction 6-carboxyhexanoyl-[ACP] + L-alanine + H(+) = (8S)-8-amino-7-oxononanoate + holo-[ACP] + CO2. Its pathway is cofactor biosynthesis; biotin biosynthesis. Functionally, catalyzes the decarboxylative condensation of pimeloyl-[acyl-carrier protein] and L-alanine to produce 8-amino-7-oxononanoate (AON), [acyl-carrier protein], and carbon dioxide. This chain is 8-amino-7-oxononanoate synthase, found in Xylella fastidiosa (strain 9a5c).